Here is a 209-residue protein sequence, read N- to C-terminus: Nucleoside triphosphate pyrophosphatase (209 aa).

Catalysis depends on aspartate 74, which acts as the Proton acceptor.

Belongs to the Maf family. A divalent metal cation is required as a cofactor.

The protein localises to the cytoplasm. The catalysed reaction is a ribonucleoside 5'-triphosphate + H2O = a ribonucleoside 5'-phosphate + diphosphate + H(+). The enzyme catalyses a 2'-deoxyribonucleoside 5'-triphosphate + H2O = a 2'-deoxyribonucleoside 5'-phosphate + diphosphate + H(+). Nucleoside triphosphate pyrophosphatase. May have a dual role in cell division arrest and in preventing the incorporation of modified nucleotides into cellular nucleic acids. This chain is Nucleoside triphosphate pyrophosphatase, found in Neorickettsia sennetsu (strain ATCC VR-367 / Miyayama) (Ehrlichia sennetsu).